The sequence spans 197 residues: Auxin-responsive protein IAA31 (197 aa).

Disordered stretches follow at residues 1–43 (MENL…DQAK) and 66–90 (SCLQ…ETQQ). An EAR-like (transcriptional repression) motif is present at residues 9–13 (LRLGL). Residues 99–186 (GLFVKVSMDG…TCKRLRIMKG (88 aa)) enclose the PB1 domain.

The protein belongs to the Aux/IAA family. As to quaternary structure, homodimers and heterodimers. Highly expressed in etiolated seedlings. Expressed in roots.

Its subcellular location is the nucleus. Aux/IAA proteins are short-lived transcriptional factors that function as repressors of early auxin response genes at low auxin concentrations. The protein is Auxin-responsive protein IAA31 (IAA31) of Oryza sativa subsp. japonica (Rice).